The primary structure comprises 1178 residues: Mannosyltransferase regulator 4 (1178 aa).

Residues 1-27 (MLQRISSKLHRRFLSGLLRVKHYPLRR) are Cytoplasmic-facing. Residues 28–48 (ILLPLILLQIIIITFIWSNSP) traverse the membrane as a helical; Signal-anchor for type II membrane protein segment. Over 49–1178 (QRNGLGRDAD…KKKQEEGHSN (1130 aa)) the chain is Lumenal. The DXD motif lies at 519–521 (DFD). Residues 1041-1178 (EKKKKEEEEK…KKKQEEGHSN (138 aa)) form a disordered region. Tandem repeats lie at residues 1042–1049 (KKKKEEEE), 1050–1057 (KKKKEEEE), 1058–1065 (KKKKEEEE), 1066–1073 (KKKKEEEE), 1074–1081 (KKKKEEEE), and 1082–1089 (KKKKEEEE). The segment at 1042–1174 (KKKKEEEEKK…EEEEKKKQEE (133 aa)) is 17 X 8 AA tandem repeats of K-K-K-K-E-E-E-E. The stretch at 1090-1097 (KKKQEEEE) is one 7; approximate repeat. Copy 8 of the repeat occupies 1098–1105 (KKKKEEEE). Residues 1106 to 1113 (KKKQEEGE) form a 9; approximate repeat. The 10; approximate repeat unit spans residues 1114 to 1121 (KMKNEDEE). An 11; approximate repeat occupies 1122 to 1129 (NKKNEDEE). Repeat unit 12 spans residues 1130-1137 (KKKNEEEE). A 13; approximate repeat occupies 1138–1144 (KKKQEEK). A 14; approximate repeat occupies 1145-1152 (NKKNEDEE). The 15; approximate repeat unit spans residues 1153 to 1160 (KKKQEEEE). The stretch at 1161-1168 (KKKNEEEE) is one 16; approximate repeat. One copy of the 17; truncated repeat lies at 1169-1174 (KKKQEE).

This sequence belongs to the MNN4 family.

The protein localises to the golgi apparatus membrane. Functionally, golgi apparatus protein involved in N-glycan mannosylphosphorylation. While MNN4 seems to have a regulatory role in N-glycan mannosylphosphorylation, a transferase activity of MNN4 can not be ruled out. Mediates mannosylphosphate transfer in both the core and outer chain portions of N-linked oligosaccharides. Has partially redundant function with MNN14. This chain is Mannosyltransferase regulator 4, found in Saccharomyces cerevisiae (strain ATCC 204508 / S288c) (Baker's yeast).